Reading from the N-terminus, the 150-residue chain is Nucleoside diphosphate kinase (150 aa).

ATP contacts are provided by lysine 9, phenylalanine 57, arginine 85, threonine 91, arginine 102, and asparagine 112. Residue histidine 115 is the Pros-phosphohistidine intermediate of the active site.

Belongs to the NDK family. In terms of assembly, homotetramer. Mg(2+) is required as a cofactor.

The protein resides in the cytoplasm. The enzyme catalyses a 2'-deoxyribonucleoside 5'-diphosphate + ATP = a 2'-deoxyribonucleoside 5'-triphosphate + ADP. It catalyses the reaction a ribonucleoside 5'-diphosphate + ATP = a ribonucleoside 5'-triphosphate + ADP. Functionally, major role in the synthesis of nucleoside triphosphates other than ATP. The ATP gamma phosphate is transferred to the NDP beta phosphate via a ping-pong mechanism, using a phosphorylated active-site intermediate. The polypeptide is Nucleoside diphosphate kinase (Staphylococcus carnosus (strain TM300)).